Consider the following 158-residue polypeptide: 6,7-dimethyl-8-ribityllumazine synthase (158 aa).

5-amino-6-(D-ribitylamino)uracil is bound by residues Phe22, 57–59 (AVE), and 81–83 (AVI). 86–87 (GT) serves as a coordination point for (2S)-2-hydroxy-3-oxobutyl phosphate. Residue His89 is the Proton donor of the active site. Phe114 provides a ligand contact to 5-amino-6-(D-ribitylamino)uracil. (2S)-2-hydroxy-3-oxobutyl phosphate is bound at residue Arg128.

This sequence belongs to the DMRL synthase family. Forms an icosahedral capsid composed of 60 subunits, arranged as a dodecamer of pentamers.

It carries out the reaction (2S)-2-hydroxy-3-oxobutyl phosphate + 5-amino-6-(D-ribitylamino)uracil = 6,7-dimethyl-8-(1-D-ribityl)lumazine + phosphate + 2 H2O + H(+). It functions in the pathway cofactor biosynthesis; riboflavin biosynthesis; riboflavin from 2-hydroxy-3-oxobutyl phosphate and 5-amino-6-(D-ribitylamino)uracil: step 1/2. Its function is as follows. Catalyzes the formation of 6,7-dimethyl-8-ribityllumazine by condensation of 5-amino-6-(D-ribitylamino)uracil with 3,4-dihydroxy-2-butanone 4-phosphate. This is the penultimate step in the biosynthesis of riboflavin. This is 6,7-dimethyl-8-ribityllumazine synthase from Shewanella oneidensis (strain ATCC 700550 / JCM 31522 / CIP 106686 / LMG 19005 / NCIMB 14063 / MR-1).